A 207-amino-acid chain; its full sequence is Pyrrolidone-carboxylate peptidase (207 aa).

Residues glutamate 80, cysteine 143, and histidine 167 contribute to the active site.

The protein belongs to the peptidase C15 family. As to quaternary structure, homotetramer.

It is found in the cytoplasm. It carries out the reaction Release of an N-terminal pyroglutamyl group from a polypeptide, the second amino acid generally not being Pro.. In terms of biological role, removes 5-oxoproline from various penultimate amino acid residues except L-proline. The protein is Pyrrolidone-carboxylate peptidase of Coprothermobacter proteolyticus (strain ATCC 35245 / DSM 5265 / OCM 4 / BT).